A 144-amino-acid chain; its full sequence is MDDENLWKVVKKDSIFETTHFSSKPVFTRSFSTKTSSSSSKPVFTRSFSTKPTSYSSSEPIFRRSFSAKPTSSKSPFLSRSGSTKCPVDTSSTSKCSISRSLSQKGASVTRKCRNMAKEHKSRFYIMKRCVLMLVCWHKHACDS.

The span at 30 to 58 shows a compositional bias: low complexity; it reads SFSTKTSSSSSKPVFTRSFSTKPTSYSSS. Positions 30-89 are disordered; the sequence is SFSTKTSSSSSKPVFTRSFSTKPTSYSSSEPIFRRSFSAKPTSSKSPFLSRSGSTKCPVD. Residues 42–58 traverse the membrane as a helical segment; that stretch reads PVFTRSFSTKPTSYSSS. Polar residues predominate over residues 68-84; the sequence is AKPTSSKSPFLSRSGST. The required for DVL/RTFL small polypeptide activity stretch occupies residues 108–139; it reads SVTRKCRNMAKEHKSRFYIMKRCVLMLVCWHK.

It belongs to the DVL/RTFL small polypeptides family.

It localises to the cell membrane. In terms of biological role, small polypeptide acting as a regulatory molecule which coordinates cellular responses required for differentiation, growth and development, probably by restricting polar cell proliferation in lateral organs and coordinating socket cell recruitment and differentiation at trichome sites. The sequence is that of Small polypeptide DEVIL 18 from Arabidopsis thaliana (Mouse-ear cress).